Here is a 100-residue protein sequence, read N- to C-terminus: Aspartyl/glutamyl-tRNA(Asn/Gln) amidotransferase subunit C (100 aa).

Belongs to the GatC family. Heterotrimer of A, B and C subunits.

It catalyses the reaction L-glutamyl-tRNA(Gln) + L-glutamine + ATP + H2O = L-glutaminyl-tRNA(Gln) + L-glutamate + ADP + phosphate + H(+). The catalysed reaction is L-aspartyl-tRNA(Asn) + L-glutamine + ATP + H2O = L-asparaginyl-tRNA(Asn) + L-glutamate + ADP + phosphate + 2 H(+). Functionally, allows the formation of correctly charged Asn-tRNA(Asn) or Gln-tRNA(Gln) through the transamidation of misacylated Asp-tRNA(Asn) or Glu-tRNA(Gln) in organisms which lack either or both of asparaginyl-tRNA or glutaminyl-tRNA synthetases. The reaction takes place in the presence of glutamine and ATP through an activated phospho-Asp-tRNA(Asn) or phospho-Glu-tRNA(Gln). This is Aspartyl/glutamyl-tRNA(Asn/Gln) amidotransferase subunit C from Streptococcus pneumoniae (strain Hungary19A-6).